Consider the following 241-residue polypeptide: Small ribosomal subunit protein bS6 (241 aa).

Residues Lys-97–Thr-108 are compositionally biased toward basic residues. A disordered region spans residues Lys-97–Asn-241. Basic and acidic residues predominate over residues Leu-109 to Asn-118. Composition is skewed to low complexity over residues Gln-130–Gln-151 and Asp-161–Gly-182. Basic and acidic residues predominate over residues Tyr-183–Glu-193. The segment covering Asn-194–Gln-210 has biased composition (low complexity).

It belongs to the bacterial ribosomal protein bS6 family.

In terms of biological role, binds together with bS18 to 16S ribosomal RNA. The protein is Small ribosomal subunit protein bS6 of Mesomycoplasma hyopneumoniae (strain J / ATCC 25934 / NCTC 10110) (Mycoplasma hyopneumoniae).